The chain runs to 279 residues: Shikimate dehydrogenase (NADP(+)) (279 aa).

Shikimate contacts are provided by residues 14 to 16 (SLS) and Thr62. Residue Lys66 is the Proton acceptor of the active site. Shikimate is bound by residues Asn87 and Asp103. Residues 127–131 (GAGGA), 151–156 (NRTKAK), and Met215 contribute to the NADP(+) site. Tyr217 is a binding site for shikimate. Residue Gly239 coordinates NADP(+).

This sequence belongs to the shikimate dehydrogenase family. As to quaternary structure, homodimer.

The enzyme catalyses shikimate + NADP(+) = 3-dehydroshikimate + NADPH + H(+). The protein operates within metabolic intermediate biosynthesis; chorismate biosynthesis; chorismate from D-erythrose 4-phosphate and phosphoenolpyruvate: step 4/7. Involved in the biosynthesis of the chorismate, which leads to the biosynthesis of aromatic amino acids. Catalyzes the reversible NADPH linked reduction of 3-dehydroshikimate (DHSA) to yield shikimate (SA). In Alteromonas mediterranea (strain DSM 17117 / CIP 110805 / LMG 28347 / Deep ecotype), this protein is Shikimate dehydrogenase (NADP(+)).